The chain runs to 2424 residues: Voltage-dependent P/Q-type calcium channel subunit alpha-1A (2424 aa).

Residues 1–98 (MARFGDEMPA…KYAKKITEWP (98 aa)) lie on the Cytoplasmic side of the membrane. The I repeat unit spans residues 85–363 (NVVRKYAKKI…LVLGVLSGEF (279 aa)). Residues 99 to 117 (PFEYMILATIIANCIVLAL) traverse the membrane as a helical segment. The Extracellular segment spans residues 118 to 135 (EQHLPDDDKTPMSERLDD). Residues 136-155 (TEPYFIGIFCFEAGIKIIAL) traverse the membrane as a helical segment. Topologically, residues 156 to 167 (GFAFHKGSYLRN) are cytoplasmic. Residues 168–185 (GWNVMDFVVVLTGILATV) traverse the membrane as a helical segment. The Extracellular portion of the chain corresponds to 186–190 (GTEFD). The helical transmembrane segment at 191-209 (LRTLRAVRVLRPLKLVSGI) threads the bilayer. The Cytoplasmic segment spans residues 210–228 (PSLQVVLKSIMKAMIPLLQ). Residues 229–248 (IGLLLFFAILIFAIIGLEFY) form a helical membrane-spanning segment. At 249-335 (MGKFHTTCFE…NSNDASGNTW (87 aa)) the chain is on the extracellular side. N-linked (GlcNAc...) asparagine glycosylation occurs at asparagine 283. Residue glutamate 318 participates in Ca(2+) binding. A helical transmembrane segment spans residues 336–360 (NWLYFIPLIIIGSFFMLNLVLGVLS). The Cytoplasmic segment spans residues 361 to 487 (GEFAKERERV…FYIRRMVKTQ (127 aa)). Residues 383 to 400 (QQIERELNGYMEWISKAE) form a binding to the beta subunit region. Residue threonine 409 is modified to Phosphothreonine. Phosphoserine is present on residues serine 448 and serine 451. The II repeat unit spans residues 473 to 717 (ERRMRFYIRR…VFLAIAVDNL (245 aa)). A helical transmembrane segment spans residues 488–506 (AFYWTVLSLVALNTLCVAI). Over 507–521 (VHYNQPEWLSDFLYY) the chain is Extracellular. Residues 522-541 (AEFIFLGLFMSEMFIKMYGL) form a helical membrane-spanning segment. Topologically, residues 542-549 (GTRPYFHS) are cytoplasmic. A helical transmembrane segment spans residues 550–568 (SFNCFDCGVIIGSIFEVIW). Over 569-578 (AVIKPGTSFG) the chain is Extracellular. Residues 579-597 (ISVLRALRLLRIFKVTKYW) form a helical membrane-spanning segment. Residues 598–616 (ASLRNLVVSLLNSMKSIIS) lie on the Cytoplasmic side of the membrane. The chain crosses the membrane as a helical span at residues 617-636 (LLFLLFLFIVVFALLGMQLF). Over 637-689 (GGQFNFDEGTPPTNFDTFPAAIMTVFQILTGEDWNEVMYDGIKSQGGVQGGMV) the chain is Extracellular. Position 668 (glutamate 668) interacts with Ca(2+). The helical transmembrane segment at 690-714 (FSIYFIVLTLFGNYTLLNVFLAIAV) threads the bilayer. Over 715 to 1253 (DNLANAQELT…RLCHYILNLR (539 aa)) the chain is Cytoplasmic. Phosphoserine occurs at positions 750, 753, and 790. A disordered region spans residues 819–1229 (HLDRPLVVDP…GEDGPKPMPP (411 aa)). 3 stretches are compositionally biased toward basic and acidic residues: residues 893–912 (ELSREGPYGRESDHQAREGG), 922–931 (EAERGKAGDP), and 969–996 (RPGEDGPDDKAERRGRHREGSRPARSGE). Positions 1053–1065 (PNLSTTRPIQQDL) are enriched in polar residues. A phosphoserine mark is found at serine 1091 and serine 1104. The span at 1110–1140 (SSTDPAGPTPATAANPQNSTASRRTPNNPGN) shows a compositional bias: low complexity. Over residues 1151–1168 (ENSLIVTNPSTAQTNSAK) the composition is skewed to polar residues. Residues 1204-1214 (LPKKEDEKKEE) are compositionally biased toward basic and acidic residues. Residues 1240 to 1523 (NPLRRLCHYI…IFVALIIITF (284 aa)) form an III repeat. The helical transmembrane segment at 1254–1272 (YFEMCILMVIAMSSIALAA) threads the bilayer. Residues 1273–1288 (EDPVQPNAPRNNVLRY) lie on the Extracellular side of the membrane. The helical transmembrane segment at 1289-1308 (FDYVFTGVFTFEMVIKMIDL) threads the bilayer. Residues 1309–1320 (GLVLHQGAYFRD) lie on the Cytoplasmic side of the membrane. A helical membrane pass occupies residues 1321 to 1339 (LWNILDFIVVSGALVAFAF). Residues 1340–1350 (TGNSKGKDINT) are Extracellular-facing. A helical transmembrane segment spans residues 1351-1369 (IKSLRVLRVLRPLKTIKRL). Over 1370–1388 (PKLKAVFDCVVNSLKNVFN) the chain is Cytoplasmic. A helical transmembrane segment spans residues 1389 to 1408 (ILIVYMLFMFIFAVVAVQLF). Over 1409-1495 (KGKFFHCTDE…QGPSPGYRME (87 aa)) the chain is Extracellular. Position 1469 (glutamate 1469) interacts with Ca(2+). Residues 1496–1520 (MSIFYVVYFVVFPFFFVNIFVALII) form a helical membrane-spanning segment. The Cytoplasmic portion of the chain corresponds to 1521–1575 (ITFQEQGDKMMEEYSLEKNERACIDFAISAKPLTRHMPQNKQSFQYRMWQFVVSP). An IV repeat occupies 1560 to 1823 (NKQSFQYRMW…LFVAVIMDNF (264 aa)). Residues 1576-1604 (PFEYTIMAMIALNTIVLMMKFYGASVAYD) form a helical membrane-spanning segment. At 1605 to 1609 (NALKV) the chain is on the extracellular side. Residues 1610–1629 (FNIVFTSLFSLECLLKVLAF) form a helical membrane-spanning segment. The Cytoplasmic portion of the chain corresponds to 1630 to 1637 (GILNYFRD). Residues 1638–1656 (AWNIFDFVTVLGSITDILV) traverse the membrane as a helical segment. Residues 1657-1665 (TEFGNNFIN) lie on the Extracellular side of the membrane. A glycan (N-linked (GlcNAc...) asparagine) is linked at asparagine 1665. A helical transmembrane segment spans residues 1666–1684 (LSFLRLFRAARLIKLLRQG). The Cytoplasmic portion of the chain corresponds to 1685 to 1703 (YTIRILLWTFVQSFKALPY). A helical membrane pass occupies residues 1704 to 1723 (VCLLIAMLFFIYAIIGMQVF). The Extracellular segment spans residues 1724–1795 (GNIGIDMEDE…ILTPECGNEF (72 aa)). A helical transmembrane segment spans residues 1796–1820 (AYFYFVSFIFLCSFLMLNLFVAVIM). The Cytoplasmic segment spans residues 1821–2424 (DNFEYLTRDS…GGPRASAPSP (604 aa)). Threonine 1993 is modified (phosphothreonine). The disordered stretch occupies residues 1997–2424 (FQRMEPPPDE…GGPRASAPSP (428 aa)). Over residues 2037–2053 (SWVTQRAQEMFQKTGTW) the composition is skewed to polar residues. A phosphoserine mark is found at serine 2054, serine 2072, serine 2084, serine 2086, serine 2127, and serine 2148. Basic and acidic residues predominate over residues 2074–2090 (EMREMSQDGYSDSEHCL). Composition is skewed to basic and acidic residues over residues 2142–2159 (RRLDDYSLERVPPEENQR) and 2200–2210 (PSREREQERGR). Residues 2211–2229 (PKDRKHRPHHHHHHHHHPG) show a composition bias toward basic residues. Residues 2249–2262 (VARVRPARAPALAH) show a composition bias toward low complexity. Basic residues predominate over residues 2280-2305 (RRARRPRPRQRRRPRRRRGGGGRALR).

It belongs to the calcium channel alpha-1 subunit (TC 1.A.1.11) family. CACNA1A subfamily. In terms of assembly, voltage-dependent calcium channels are multisubunit complexes, consisting of alpha-1, alpha-2, beta and delta subunits in a 1:1:1:1 ratio. The channel activity is directed by the pore-forming and voltage-sensitive alpha-1 subunit. In many cases, this subunit is sufficient to generate voltage-sensitive calcium channel activity. The auxiliary subunits beta and alpha-2/delta linked by a disulfide bridge regulate the channel activity. Interacts with CABP1. Interacts with the spider omega-agatoxin-IVA (AC P30288). Interacts with TSPOAP1. Brain specific. Purkinje cells contain predominantly P-type VSCC, the Q-type being a prominent calcium current in cerebellar granule cells.

It is found in the cell membrane. It carries out the reaction Ca(2+)(in) = Ca(2+)(out). Functionally, voltage-sensitive calcium channels (VSCC) mediate the entry of calcium ions into excitable cells and are also involved in a variety of calcium-dependent processes, including muscle contraction, hormone or neurotransmitter release, gene expression, cell motility, cell division and cell death. The isoform alpha-1A gives rise to P and/or Q-type calcium currents. P/Q-type calcium channels belong to the 'high-voltage activated' (HVA) group and are specifically blocked by the spider omega-agatoxin-IVA (AC P54282). They are however insensitive to dihydropyridines (DHP). This is Voltage-dependent P/Q-type calcium channel subunit alpha-1A (CACNA1A) from Oryctolagus cuniculus (Rabbit).